A 220-amino-acid chain; its full sequence is Charged multivesicular body protein 2a (220 aa).

2 coiled-coil regions span residues 12–53 (EEML…MAKQ) and 199–220 (PSAALADADADLEERLNNLRRD). The interval 179–208 (LSNLPSTGGSLSVAGAKKGEPSAALADADA) is disordered. Positions 208–218 (ADLEERLNNLR) match the MIT-interacting motif motif.

This sequence belongs to the SNF7 family. Probable core component of the endosomal sorting required for transport complex III (ESCRT-III). ESCRT-III components are thought to multimerize to form a flat lattice on the perimeter membrane of the endosome.

It is found in the late endosome membrane. The protein localises to the cytoplasm. In terms of biological role, probable core component of the endosomal sorting required for transport complex III (ESCRT-III) which is involved in multivesicular bodies (MVBs) formation and sorting of endosomal cargo proteins into MVBs. MVBs contain intraluminal vesicles (ILVs) that are generated by invagination and scission from the limiting membrane of the endosome and mostly are delivered to lysosomes enabling degradation of membrane proteins, such as stimulated growth factor receptors, lysosomal enzymes and lipids. This chain is Charged multivesicular body protein 2a (chmp2a), found in Xenopus tropicalis (Western clawed frog).